The chain runs to 432 residues: Adenylosuccinate synthetase (432 aa).

Residues 13 to 19 (GDEGKGK) and 41 to 43 (GHT) contribute to the GTP site. Residue aspartate 14 is the Proton acceptor of the active site. Residues aspartate 14 and glycine 41 each coordinate Mg(2+). Residues 14–17 (DEGK), 39–42 (NAGH), threonine 130, arginine 144, glutamine 225, threonine 240, and arginine 304 contribute to the IMP site. Histidine 42 (proton donor) is an active-site residue. A substrate-binding site is contributed by 300–306 (AVTGRPR). Residues arginine 306, 332–334 (KLD), and 415–417 (STG) each bind GTP.

This sequence belongs to the adenylosuccinate synthetase family. As to quaternary structure, homodimer. Mg(2+) is required as a cofactor.

The protein localises to the cytoplasm. The catalysed reaction is IMP + L-aspartate + GTP = N(6)-(1,2-dicarboxyethyl)-AMP + GDP + phosphate + 2 H(+). The protein operates within purine metabolism; AMP biosynthesis via de novo pathway; AMP from IMP: step 1/2. Plays an important role in the de novo pathway of purine nucleotide biosynthesis. Catalyzes the first committed step in the biosynthesis of AMP from IMP. The polypeptide is Adenylosuccinate synthetase (Actinobacillus pleuropneumoniae serotype 7 (strain AP76)).